We begin with the raw amino-acid sequence, 829 residues long: UBA domain-containing protein 8 (829 aa).

An EH 1 domain is found at 10–109 (EQQEFDRLLE…KQAKDDHHIK (100 aa)). The EF-hand 1 domain maps to 43 to 78 (LPQKILAKIWDYCDQEDKGSLDRNQVYACFRLISQA). The segment at 93–121 (GDPPILPKQAKDDHHIKRSSSETADFTPF) is disordered. Residues serine 112 and serine 113 each carry the phosphoserine modification. 2 EH domains span residues 129 to 225 (ERSE…AKSE) and 300 to 398 (DRSN…SDDT). Residues 333 to 368 (LDSEELARIWDTVDTQDRGYIDKDEFAVAMEIIKLR) enclose the EF-hand 2 domain. Composition is skewed to polar residues over residues 466 to 506 (SFQD…TQSI) and 574 to 590 (TIPG…QTTE). Disordered regions lie at residues 466–520 (SFQD…VNSS), 574–614 (TIPG…MRKL), and 724–785 (KPQV…QSYE). The stretch at 602-709 (EPTEEEQEEM…AKIDSIIADS (108 aa)) forms a coiled coil. The span at 728–737 (TPAPPTPAPT) shows a compositional bias: pro residues. A compositionally biased stretch (polar residues) spans 764 to 774 (HANSSTPMNYV). A compositionally biased stretch (low complexity) spans 775–785 (SQPESPPQSYE). A UBA domain is found at 788–828 (QNDNELLQELLSMGFPREKAVIALEATNYDVNEAANILLSS).

In Schizosaccharomyces pombe (strain 972 / ATCC 24843) (Fission yeast), this protein is UBA domain-containing protein 8 (ucp8).